A 176-amino-acid chain; its full sequence is Peptide methionine sulfoxide reductase MsrA (176 aa).

Cysteine 14 is an active-site residue.

This sequence belongs to the MsrA Met sulfoxide reductase family.

It catalyses the reaction L-methionyl-[protein] + [thioredoxin]-disulfide + H2O = L-methionyl-(S)-S-oxide-[protein] + [thioredoxin]-dithiol. The catalysed reaction is [thioredoxin]-disulfide + L-methionine + H2O = L-methionine (S)-S-oxide + [thioredoxin]-dithiol. In terms of biological role, has an important function as a repair enzyme for proteins that have been inactivated by oxidation. Catalyzes the reversible oxidation-reduction of methionine sulfoxide in proteins to methionine. The chain is Peptide methionine sulfoxide reductase MsrA from Halalkalibacterium halodurans (strain ATCC BAA-125 / DSM 18197 / FERM 7344 / JCM 9153 / C-125) (Bacillus halodurans).